The chain runs to 815 residues: ABC transporter G family member 7 (815 aa).

Disordered stretches follow at residues 81-141 and 177-249; these read NNID…TPNF and KQIK…TNGK. The stretch at 164–199 forms a coiled coil; sequence ENISYKTENRNYKKQIKDEKKRKKKLEMERSNSSNS. A compositionally biased stretch (low complexity) spans 194–210; the sequence is SNSSNSNSSYDVESSAS. A compositionally biased stretch (polar residues) spans 211–248; sequence GLQTPQQSRSSILPTNSLNISKIDQSMNPQQTRSTTNG. The region spanning 242 to 485 is the ABC transporter domain; that stretch reads TRSTTNGKIE…SLPNQYQCPN (244 aa). 274 to 281 is an ATP binding site; it reads GPSGSGKS. The ABC transmembrane type-2 domain occupies 562-810; it reads TQYITRLSGG…VSGYWAISKL (249 aa). 7 helical membrane passes run 568–588, 598–618, 647–667, 675–695, 706–726, 732–752, and 788–808; these read LSGGFMIGLLFSACFGTLSPS, ILFFLIAVLNLIPFTCITLFL, AFIQFLVSLIVSLLVYTINHL, FITYFILYLINLLSDLYIIAI, FIYGTTISITFLLFMGHLVPV, SFGWIHWLNPLYYGYATVMVA, and GIGIIILWICFFFVSGYWAIS.

It belongs to the ABC transporter superfamily. ABCG family.

The protein resides in the membrane. This chain is ABC transporter G family member 7 (abcG7), found in Dictyostelium discoideum (Social amoeba).